The primary structure comprises 210 residues: Chaperone protein TorD (210 aa).

This sequence belongs to the TorD/DmsD family. TorD subfamily.

It is found in the cytoplasm. Its function is as follows. Involved in the biogenesis of TorA. Acts on TorA before the insertion of the molybdenum cofactor and, as a result, probably favors a conformation of the apoenzyme that is competent for acquiring the cofactor. The chain is Chaperone protein TorD from Salmonella choleraesuis (strain SC-B67).